The chain runs to 477 residues: Inositol phosphosphingolipids phospholipase C (477 aa).

Over 1-398 (MYNRKDRDVH…QRQKFFRGLH (398 aa)) the chain is Cytoplasmic. Glu100 is a Mg(2+) binding site. Catalysis depends on His334, which acts as the Proton acceptor. A helical membrane pass occupies residues 399 to 417 (FWASILLLIASLVVTTFTA). Residues 418–424 (NKAGWSS) are Mitochondrial intermembrane-facing. A helical membrane pass occupies residues 425–449 (IFWVLFAIAVSISGTIDGAISFLFG). The Cytoplasmic portion of the chain corresponds to 450 to 477 (RSEIRALIEVEQEVLDAEHHLQTFLSEK).

This sequence belongs to the neutral sphingomyelinase family. Requires Mg(2+) as cofactor.

It is found in the endoplasmic reticulum membrane. It localises to the mitochondrion outer membrane. It carries out the reaction an N-acyl-(4R)-4-hydroxysphinganine-1-phosphoinositol + H2O = 1D-myo-inositol 1-phosphate + an N-acyl-(4R)-4-hydroxysphinganine + H(+). The catalysed reaction is a mannosylinositol-1-phospho-N-acyl-sphingoid base + H2O = mannosylinositol-1-phosphate + an N-acyl-sphingoid base + H(+). The enzyme catalyses an inositol phosphomannosylinositol-1-phospho-N-acyl-(4R)-4-hydroxysphinganine + H2O = mannosyldiinositol-1-phosphate + an N-acyl-(4R)-4-hydroxysphinganine + H(+). It functions in the pathway lipid metabolism; sphingolipid metabolism. With respect to regulation, activated through localization to mitochondria in specific growth phases. Its function is as follows. Responsible for the hydrolysis of the phosphosphingolipids (IPS), inositol phosphorylceramide (IPC), mannosylinositol phosphorylceramide (MIPC), and mannosyldiinositol phosphorylceramide (M(IP)2C). Regulates sphingolipid metabolism in mitochondria, especially the formation of alpha-hydroxylated very long chain phytoceramides. The generated ceramides contribute to the normal function of mitochondria. Also active on sphingomyelin (SM), but this activity is probably not physiologically relevant. This is Inositol phosphosphingolipids phospholipase C from Saccharomyces cerevisiae (strain ATCC 204508 / S288c) (Baker's yeast).